The following is a 355-amino-acid chain: MQPSTLQALTKRVLATQHVSNDDYCILERCGLWWHDAPITLYTDGEQILIKTPYYKEGIKLNTALVLAVKENNYDLIVLFTEWGANINYALLSVNKEYTRNLCRNLGAKEGLEASEVLRFFFETKRHKTSSNIILCHELFSNNPFLQNVNMVELRMIIYWELKDLITNLIVNENSFTEMLTKYWYGIAVKYNLKEAIQYFCQEYEHLNEWRLICALSFNNVFELHEICNTMNIDMNINKMMRLACMRDNNFLTIYYCFALGADINRAMYGSVSNFRIENMFFCMDLGADAFEESLELAERHGYSVIVDILSLKIYKANPILLAKETNPEKINTLLKNYYPKNMLAYDIYRIDNYL.

The stretch at Lys60–Leu92 is one ANK repeat.

It belongs to the asfivirus MGF 360 family.

Its function is as follows. Plays a role in virus cell tropism, and may be required for efficient virus replication in macrophages. This is Protein MGF 360-3L from Ornithodoros (relapsing fever ticks).